The following is a 664-amino-acid chain: Glycine--tRNA ligase beta subunit (664 aa).

Belongs to the class-II aminoacyl-tRNA synthetase family. Tetramer of two alpha and two beta subunits.

It is found in the cytoplasm. It catalyses the reaction tRNA(Gly) + glycine + ATP = glycyl-tRNA(Gly) + AMP + diphosphate. The chain is Glycine--tRNA ligase beta subunit from Rickettsia conorii (strain ATCC VR-613 / Malish 7).